The sequence spans 240 residues: Regulatory protein SdiA (240 aa).

Residues 173–238 enclose the HTH luxR-type domain; sequence VMTPEMNFSK…QVACYAAATG (66 aa). The segment at residues 197 to 216 is a DNA-binding region (H-T-H motif); that stretch reads SAEIAMILSISENTVNFHQK.

In terms of biological role, activates cell division by specifically increasing transcription from one of the two promoters that lie immediately upstream of the ftsQAZ gene cluster. Activates ydiV expression in response to extracellular autoinducer AI-1 (Vibrio fischeri autoinducer oxoC6). The polypeptide is Regulatory protein SdiA (sdiA) (Escherichia coli (strain K12)).